The following is a 537-amino-acid chain: Eukaryotic translation initiation factor 3 subunit L (537 aa).

The PCI domain maps to 301-513; the sequence is TFSSILLYIQ…IHIADTKVSH (213 aa).

It belongs to the eIF-3 subunit L family. Component of the eukaryotic translation initiation factor 3 (eIF-3) complex.

The protein localises to the cytoplasm. Component of the eukaryotic translation initiation factor 3 (eIF-3) complex, which is involved in protein synthesis of a specialized repertoire of mRNAs and, together with other initiation factors, stimulates binding of mRNA and methionyl-tRNAi to the 40S ribosome. The eIF-3 complex specifically targets and initiates translation of a subset of mRNAs involved in cell proliferation. This is Eukaryotic translation initiation factor 3 subunit L from Aedes aegypti (Yellowfever mosquito).